The primary structure comprises 314 residues: ATP synthase gamma chain (314 aa).

It belongs to the ATPase gamma chain family. As to quaternary structure, F-type ATPases have 2 components, CF(1) - the catalytic core - and CF(0) - the membrane proton channel. CF(1) has five subunits: alpha(3), beta(3), gamma(1), delta(1), epsilon(1). CF(0) has three main subunits: a, b and c.

The protein resides in the cell membrane. In terms of biological role, produces ATP from ADP in the presence of a proton gradient across the membrane. The gamma chain is believed to be important in regulating ATPase activity and the flow of protons through the CF(0) complex. The chain is ATP synthase gamma chain from Limosilactobacillus reuteri (strain DSM 20016) (Lactobacillus reuteri).